Here is a 118-residue protein sequence, read N- to C-terminus: Sarafotoxin-i1 (118 aa).

A signal peptide spans 1-23 (MALLPRLAAGGLLLLLALAALDG). Positions 24 to 84 (KPAPPKLLQK…LSPLRKPQPL (61 aa)) are excised as a propeptide. 2 cysteine pairs are disulfide-bonded: Cys-85–Cys-99 and Cys-87–Cys-95. A propeptide spanning residues 112–118 (PSPIQSS) is cleaved from the precursor.

It belongs to the endothelin/sarafotoxin family. Different length molecules ranging from 15 (85-99) to 30 amino acids (85-114) have been found in the venom. Expressed by the venom gland.

It is found in the secreted. Its function is as follows. Vasoconstrictor activity. These toxins cause cardiac arrest probably as a result of coronary vasospasm. Sarafotoxin-i3: vasoconstrictor activity. Causes cardiac arrest probably as a result of coronary vasospasm. Displays low agonistic activities towards endothelin-2 receptor (EDNRB) (displays affinity in the micromolar range). In Atractaspis irregularis (Variable burrowing asp), this protein is Sarafotoxin-i1.